The primary structure comprises 245 residues: 8-amino-3,8-dideoxy-manno-octulosonate cytidylyltransferase (245 aa).

This sequence belongs to the KdsB family.

It is found in the cytoplasm. The enzyme catalyses 8-amino-3,8-dideoxy-alpha-D-manno-octulosonate + CTP = CMP-8-amino-3,8-dideoxy-alpha-D-manno-oct-2-ulosonate + diphosphate. It participates in bacterial outer membrane biogenesis; lipopolysaccharide biosynthesis. Its function is as follows. Activates KDO8N (a required 8-carbon sugar) for incorporation into bacterial lipopolysaccharide in the Shewanella genus. This is 8-amino-3,8-dideoxy-manno-octulosonate cytidylyltransferase from Shewanella halifaxensis (strain HAW-EB4).